Reading from the N-terminus, the 1125-residue chain is Speract receptor (1125 aa).

The first 21 residues, 1-21 (MAHARHLFLFMVAFTITMVIA), serve as a signal peptide directing secretion. Residues 22–510 (RLDFNPTIIN…GELCTNWALY (489 aa)) lie on the Extracellular side of the membrane. N-linked (GlcNAc...) asparagine glycosylation is found at Asn-185 and Asn-409. Residues 511-531 (LGASIPTFLIIFGGLIGFFIY) traverse the membrane as a helical segment. Topologically, residues 532–1125 (RKRAYEAALD…AANRVIPDDV (594 aa)) are cytoplasmic. One can recognise a Protein kinase domain in the interval 571–839 (MSAISVISNA…PNIMAVRTML (269 aa)). In terms of domain architecture, Guanylate cyclase spans 914 to 1044 (SIFFSDIVGF…DTVNTASRME (131 aa)).

This sequence belongs to the adenylyl cyclase class-4/guanylyl cyclase family.

It localises to the membrane. The enzyme catalyses GTP = 3',5'-cyclic GMP + diphosphate. Functionally, implicated as a cell-surface receptor on spermatozoa for 'speract' a chemotactic peptide, and on various other cells as a receptor for atrial natriuretic peptide. This is Speract receptor from Strongylocentrotus purpuratus (Purple sea urchin).